Consider the following 292-residue polypeptide: ATP synthase gamma chain (292 aa).

Belongs to the ATPase gamma chain family. F-type ATPases have 2 components, CF(1) - the catalytic core - and CF(0) - the membrane proton channel. CF(1) has five subunits: alpha(3), beta(3), gamma(1), delta(1), epsilon(1). CF(0) has three main subunits: a, b and c.

The protein localises to the cell inner membrane. Produces ATP from ADP in the presence of a proton gradient across the membrane. The gamma chain is believed to be important in regulating ATPase activity and the flow of protons through the CF(0) complex. This is ATP synthase gamma chain from Brucella ovis (strain ATCC 25840 / 63/290 / NCTC 10512).